Consider the following 70-residue polypeptide: UPF0352 protein Sfri_2492 (70 aa).

It belongs to the UPF0352 family.

The polypeptide is UPF0352 protein Sfri_2492 (Shewanella frigidimarina (strain NCIMB 400)).